A 217-amino-acid chain; its full sequence is Transcriptional regulatory protein CutR (217 aa).

Residues 2 to 116 form the Response regulatory domain; that stretch reads RVLVVEDEQL…ELIARVRALG (115 aa). At D51 the chain carries 4-aspartylphosphate. Positions 124 to 217 form a DNA-binding region, ompR/PhoB-type; sequence PPVLERAGIK…VTVPGSGYRI (94 aa).

Functionally, member of the two-component regulatory system CutS/CutR, involved in the regulation of copper metabolism. CutR suppresses a defective melC1 gene, encoding a putative copper-transfer gene, probably by altering copper metabolism. The protein is Transcriptional regulatory protein CutR (cutR) of Streptomyces lividans.